Here is a 414-residue protein sequence, read N- to C-terminus: Transforming growth factor beta-2 proprotein (414 aa).

A signal peptide spans 1–20 (MHYCVLSAFLLLHLVTAALS). N-linked (GlcNAc...) asparagine glycans are attached at residues N72, N140, and N241. 4 cysteine pairs are disulfide-bonded: C309/C318, C317/C380, C346/C411, and C350/C413.

Belongs to the TGF-beta family. In terms of assembly, interacts with the serine proteases, HTRA1 and HTRA3. Interacts with ASPN. Interacts with MFAP5. As to quaternary structure, interacts with Transforming growth factor beta-2 (TGF-beta-2) chain; interaction is non-covalent and maintains (TGF-beta-2) in a latent state. Interacts with LRRC32/GARP; leading to regulate activation of TGF-beta-2. Interacts with NREP; the interaction results in a decrease in TGFB2 autoinduction. Transforming growth factor beta-2: Homodimer; disulfide-linked. Transforming growth factor beta-2: Interacts with TGF-beta receptors (TGFBR1 and TGFBR2), leading to signal transduction. The precursor proprotein is cleaved in the Golgi apparatus to form Transforming growth factor beta-2 (TGF-beta-2) and Latency-associated peptide (LAP) chains, which remain non-covalently linked, rendering TGF-beta-2 inactive.

It is found in the secreted. The protein localises to the extracellular space. It localises to the extracellular matrix. Its function is as follows. Precursor of the Latency-associated peptide (LAP) and Transforming growth factor beta-2 (TGF-beta-2) chains, which constitute the regulatory and active subunit of TGF-beta-2, respectively. Required to maintain the Transforming growth factor beta-2 (TGF-beta-2) chain in a latent state during storage in extracellular matrix. Associates non-covalently with TGF-beta-2 and regulates its activation via interaction with 'milieu molecules', such as LTBP1 and LRRC32/GARP, that control activation of TGF-beta-2. Functionally, multifunctional protein that regulates various processes such as angiogenesis and heart development. Activation into mature form follows different steps: following cleavage of the proprotein in the Golgi apparatus, Latency-associated peptide (LAP) and Transforming growth factor beta-2 (TGF-beta-2) chains remain non-covalently linked rendering TGF-beta-2 inactive during storage in extracellular matrix. At the same time, LAP chain interacts with 'milieu molecules', such as LTBP1 and LRRC32/GARP, that control activation of TGF-beta-2 and maintain it in a latent state during storage in extracellular milieus. Once activated following release of LAP, TGF-beta-2 acts by binding to TGF-beta receptors (TGFBR1 and TGFBR2), which transduce signal. This is Transforming growth factor beta-2 proprotein (TGFB2) from Mustela putorius furo (European domestic ferret).